Reading from the N-terminus, the 1205-residue chain is Solute carrier family 12 member 2 (1205 aa).

Met-1 carries the N-acetylmethionine modification. Low complexity predominate over residues Met-1–Ala-22. Residues Met-1–Ala-102 form a disordered region. The Cytoplasmic portion of the chain corresponds to Met-1–Gly-279. The segment covering Gly-23–Arg-35 has biased composition (basic residues). Phosphoserine is present on residues Ser-74 and Ser-76. The RFXV motif 1 motif lies at Arg-77 to Val-80. Over residues Ala-87–Ala-102 the composition is skewed to low complexity. Residues Arg-133 to Val-136 carry the RFXV motif 2 motif. Residues Ala-143–Ala-155 are compositionally biased toward low complexity. A disordered region spans residues Ala-143 to Gly-187. 5 positions are modified to phosphothreonine: Thr-196, Thr-200, Thr-205, Thr-210, and Thr-223. Ser-235 carries the post-translational modification Phosphoserine. Position 259 is a phosphothreonine (Thr-259). The chain crosses the membrane as a discontinuously helical span at residues Trp-280–Gly-309. A Na(+)-binding site is contributed by Leu-290. Asn-291 and Ile-292 together coordinate K(+). Trp-293 lines the Na(+) pocket. The chloride site is built by Gly-294, Val-295, and Met-296. A helical transmembrane segment spans residues Ile-310–Leu-329. The Cytoplasmic portion of the chain corresponds to Ser-330 to Ala-360. A helical transmembrane segment spans residues Ile-361–Leu-388. Chloride is bound at residue Phe-365. Position 376 (Tyr-376) interacts with K(+). At Lys-389–Glu-398 the chain is on the extracellular side. A helical membrane pass occupies residues Ile-399 to Glu-422. Residues Trp-423 to Ala-425 are Cytoplasmic-facing. A helical membrane pass occupies residues Lys-426–Phe-447. Over Ile-448–Thr-479 the chain is Extracellular. The discontinuously helical transmembrane segment at Phe-480–Gly-497 threads the bilayer. Pro-489, Ala-490, and Thr-492 together coordinate K(+). Positions 489 and 490 each coordinate chloride. Chloride is bound by residues Gly-493 and Ile-494. At Ala-498–Pro-512 the chain is on the cytoplasmic side. A helical membrane pass occupies residues Lys-513–Gly-534. The Extracellular segment spans residues Ser-535–Gly-591. 2 N-linked (GlcNAc...) asparagine glycosylation sites follow: Asn-546 and Asn-555. Disulfide bonds link Cys-556–Cys-561 and Cys-570–Cys-575. The helical transmembrane segment at Phe-592 to Pro-616 threads the bilayer. 3 residues coordinate Na(+): Ala-603, Ser-606, and Ser-607. Residues Lys-617–Pro-644 are Cytoplasmic-facing. Helical transmembrane passes span Leu-645–Asn-665 and Val-666–Phe-684. Residues Phe-675 and Tyr-679 each contribute to the chloride site. The Cytoplasmic portion of the chain corresponds to Ser-685–Trp-707. The next 2 membrane-spanning stretches (helical) occupy residues Ile-708 to Trp-725 and Trp-726 to Leu-738. Over Tyr-739–Ser-1205 the chain is Cytoplasmic. The scissor helix stretch occupies residues Ser-754–Ser-771. Phosphoserine is present on residues Ser-933 and Ser-937. The segment at Ser-953–Glu-986 is disordered. At Ser-987 the chain carries Phosphoserine.

The protein belongs to the SLC12A transporter family. Homodimer; adopts a domain-swap conformation at the scissor helices connecting the transmembrane domain and C-terminal domain. In terms of processing, phosphorylated at Thr-196, Thr-200 and Thr-205 by OXSR1/OSR1 and STK39/SPAK downstream of WNK kinases (WNK1, WNK2, WNK3 or WNK4), promoting its activity. In terms of tissue distribution, widely expressed. High expression found in the cochlea, cochlear lateral wall, and the choroid plexus. Lower expression found in the cerebellum and the cortex.

It localises to the basolateral cell membrane. The enzyme catalyses K(+)(out) + 2 chloride(out) + Na(+)(out) = K(+)(in) + 2 chloride(in) + Na(+)(in). With respect to regulation, activated following phosphorylation by OXSR1/OSR1 and STK39/SPAK downstream of WNK kinases (WNK1, WNK2, WNK3 or WNK4). Inhibited by bumetanide and furosemide. In terms of biological role, cation-chloride cotransporter which mediates the electroneutral transport of chloride, potassium and/or sodium ions across the membrane. Plays a vital role in the regulation of ionic balance and cell volume. This chain is Solute carrier family 12 member 2 (Slc12a2), found in Mus musculus (Mouse).